The following is a 180-amino-acid chain: ADP ribosylation factor 4 (180 aa).

A lipid anchor (N-myristoyl glycine) is attached at Gly2. GTP contacts are provided by residues 24–31, 67–71, and 126–129; these read GLDAAGKT, DVGGQ, and NKQD.

The protein belongs to the small GTPase superfamily. Arf family. Uniformly distributed throughout adults.

It is found in the golgi apparatus. GTP-binding protein involved in protein trafficking; may modulate vesicle budding and uncoating within the Golgi apparatus. This chain is ADP ribosylation factor 4, found in Drosophila melanogaster (Fruit fly).